A 449-amino-acid chain; its full sequence is Chlorobenzene dioxygenase subunit alpha (449 aa).

In terms of domain architecture, Rieske spans 54-163 (WLLLGHETQI…VATYKGLIFA (110 aa)). 4 residues coordinate [2Fe-2S] cluster: cysteine 96, histidine 98, cysteine 116, and histidine 119. Residues histidine 222, histidine 228, and aspartate 376 each contribute to the Fe cation site.

This sequence belongs to the bacterial ring-hydroxylating dioxygenase alpha subunit family. As to quaternary structure, this dioxygenase system consists of four proteins: the two subunits of the oxygenase component (TecA1 and TecA2), a ferredoxin (TecA3) and a ferredoxin reductase (TecA4). It depends on [2Fe-2S] cluster as a cofactor. The cofactor is Fe cation.

It catalyses the reaction chlorobenzene + NADH + O2 + H(+) = (1R,2R)-3-chlorocyclohexa-3,5-diene-1,2-diol + NAD(+). It participates in aromatic compound metabolism. In terms of biological role, part of the oxygenase component of the chlorobenzene dioxygenase system that catalyzes the dihydroxylation of a range of aromatic compounds, including chlorinated benzenes and toluenes, and dinuclear aromatics such as biphenyl and dibenzo-p-dioxin. The alpha subunit is responsible for substrate specificity. This chain is Chlorobenzene dioxygenase subunit alpha, found in Cupriavidus sp. (strain PS12).